The chain runs to 291 residues: tRNA dimethylallyltransferase (291 aa).

9 to 16 contacts ATP; it reads GPTASGKT. Substrate is bound at residue 11–16; sequence TASGKT. The interval 34-37 is interaction with substrate tRNA; that stretch reads DSLQ.

The protein belongs to the IPP transferase family. In terms of assembly, monomer. The cofactor is Mg(2+).

It carries out the reaction adenosine(37) in tRNA + dimethylallyl diphosphate = N(6)-dimethylallyladenosine(37) in tRNA + diphosphate. Functionally, catalyzes the transfer of a dimethylallyl group onto the adenine at position 37 in tRNAs that read codons beginning with uridine, leading to the formation of N6-(dimethylallyl)adenosine (i(6)A). This Onion yellows phytoplasma (strain OY-M) protein is tRNA dimethylallyltransferase.